We begin with the raw amino-acid sequence, 811 residues long: DEAD-box ATP-dependent RNA helicase 48 (811 aa).

Disordered regions lie at residues 1–32 (MGGG…ERGL) and 93–138 (DDGP…EPRL). Over residues 15–29 (WQHKRMHEKLARHKE) the composition is skewed to basic residues. 2 stretches are compositionally biased toward basic and acidic residues: residues 95–104 (GPIHRADRPR) and 117–138 (GDRR…EPRL). A coiled-coil region spans residues 286–333 (RNCDMKKERRALKSYEEENNDLAGSFRELREEIKNREVLGAERRRYES). Residues 342–370 (KRFEECGISPLTVKALTDAGYVQTTVVQE) carry the Q motif motif. Positions 373–556 (LPMCLEGKDV…QLVLKRDHVF (184 aa)) constitute a Helicase ATP-binding domain. An ATP-binding site is contributed by 386–393 (AKTGTGKS). The DEAD box motif lies at 504–507 (DEAD). A Helicase C-terminal domain is found at 570–740 (KVEQLYLVMP…EMKRKVDGSI (171 aa)).

It belongs to the DEAD box helicase family.

It catalyses the reaction ATP + H2O = ADP + phosphate + H(+). The protein is DEAD-box ATP-dependent RNA helicase 48 of Oryza sativa subsp. japonica (Rice).